The sequence spans 157 residues: MFDILMYLFENYVHSEVELLVDEDELTKELTRAGFHQSEILKALTWLERLAELQEGDKPYLCNHDQHSFRIYTKDEMDKLDVESRGFLLFLEQVKVLNVETREMVIDRVMELDEPTLILEDLKWVILMVLFNAPGHESAYEQMEDLIFEQPEGRLHS.

This sequence belongs to the Smg family.

The polypeptide is Protein Smg homolog (Shewanella putrefaciens (strain CN-32 / ATCC BAA-453)).